The primary structure comprises 534 residues: Probable DNA polymerase epsilon subunit 2 (534 aa).

This sequence belongs to the DNA polymerase epsilon subunit B family. In terms of assembly, consists of four subunits.

It is found in the nucleus. Accessory component of the DNA polymerase epsilon complex. Participates in DNA repair and in chromosomal DNA replication. This Caenorhabditis elegans protein is Probable DNA polymerase epsilon subunit 2 (pole-2).